We begin with the raw amino-acid sequence, 423 residues long: Deferrochelatase (423 aa).

Positions 1 to 35 form a signal peptide, tat-type signal; sequence MQYEDKNGVNEPSRRRLLKGIGALALAGSCPVAHA. Heme b-binding positions include 236–238, histidine 329, 334–336, and arginine 347; these read GTA and NPR.

This sequence belongs to the DyP-type peroxidase family. EfeB subfamily. As to quaternary structure, the heme-bound EfeB forms a homodimer whereas the apo-form mainly exists as a monomer. Part of a ferrous iron transporter composed of EfeU, EfeO and EfeB. Heme b is required as a cofactor. Post-translationally, predicted to be exported by the Tat system. The position of the signal peptide cleavage has not been experimentally proven.

Its subcellular location is the periplasm. The catalysed reaction is heme b + 2 H(+) = protoporphyrin IX + Fe(2+). In terms of biological role, involved in the recovery of exogenous heme iron. Extracts iron from heme while preserving the protoporphyrin ring intact. Also displays peroxidase activity on guaiacol and catechol in vitro. The deferrochelatase activity appears to be closely related to the peroxidation activity, but the link is unclear. This chain is Deferrochelatase (efeB), found in Escherichia coli O157:H7.